The sequence spans 161 residues: Transcriptional repressor NrdR (161 aa).

Positions 1 to 11 (MRCPSCNSLDT) are enriched in polar residues. Positions 1–20 (MRCPSCNSLDTQVKDSRPTE) are disordered. A zinc finger lies at 3–34 (CPSCNSLDTQVKDSRPTEDSSVIRRRRVCVTC). In terms of domain architecture, ATP-cone spans 49–139 (LTVIKRNGRR…VYRNFREAKD (91 aa)).

This sequence belongs to the NrdR family. Zn(2+) serves as cofactor.

Its function is as follows. Negatively regulates transcription of bacterial ribonucleotide reductase nrd genes and operons by binding to NrdR-boxes. The chain is Transcriptional repressor NrdR from Bradyrhizobium sp. (strain BTAi1 / ATCC BAA-1182).